The sequence spans 236 residues: Phospholipid hydroperoxide glutathione peroxidase, chloroplastic (236 aa).

A chloroplast-targeting transit peptide spans 1 to 64 (MASMAFSTTF…SNFPIVPSKT (64 aa)). Cys111 is a catalytic residue.

It belongs to the glutathione peroxidase family.

It localises to the plastid. Its subcellular location is the chloroplast stroma. It carries out the reaction a hydroperoxy polyunsaturated fatty acid + 2 glutathione = a hydroxy polyunsaturated fatty acid + glutathione disulfide + H2O. Functionally, protects cells and enzymes from oxidative damage, by catalyzing the reduction of hydrogen peroxide, lipid peroxides and organic hydroperoxide, by glutathione. The polypeptide is Phospholipid hydroperoxide glutathione peroxidase, chloroplastic (Pisum sativum (Garden pea)).